A 369-amino-acid chain; its full sequence is Flagellar P-ring protein (369 aa).

Positions 1-23 are cleaved as a signal peptide; the sequence is MRSLLRWMGVLLLCGLCAAPAQA.

This sequence belongs to the FlgI family. In terms of assembly, the basal body constitutes a major portion of the flagellar organelle and consists of four rings (L,P,S, and M) mounted on a central rod.

The protein localises to the periplasm. The protein resides in the bacterial flagellum basal body. Assembles around the rod to form the L-ring and probably protects the motor/basal body from shearing forces during rotation. The chain is Flagellar P-ring protein from Chromohalobacter salexigens (strain ATCC BAA-138 / DSM 3043 / CIP 106854 / NCIMB 13768 / 1H11).